The sequence spans 291 residues: Insulin-like growth factor-binding protein 3 (291 aa).

Residues 1–27 (MLRARPALWAAALTALTLLRGPPAARA) form the signal peptide. Residues 28 to 134 (GAGTMGAGPV…LRPYLLPSAS (107 aa)) are IGF-binding. Residues 36-119 (PVVRCEPCDA…LDGRGLCANA (84 aa)) form the IGFBP N-terminal domain. Intrachain disulfides connect Cys-40/Cys-69, Cys-43/Cys-71, Cys-51/Cys-72, Cys-60/Cys-75, Cys-83/Cys-96, and Cys-90/Cys-116. N-linked (GlcNAc...) asparagine glycans are attached at residues Asn-118 and Asn-136. 2 disordered regions span residues 132–162 (SASG…RVPV) and 177–211 (KGHA…TEYG). Positions 146-155 (MGSTENQAGP) are enriched in polar residues. Phosphoserine is present on Ser-148. Residues 177 to 190 (KGHAKDSQRYKVDY) show a composition bias toward basic and acidic residues. The segment covering 191-202 (ESQSTDTQNFSS) has biased composition (polar residues). N-linked (GlcNAc...) asparagine glycosylation is present at Asn-199. The residue at position 201 (Ser-201) is a Phosphoserine. The Thyroglobulin type-1 domain maps to 210 to 285 (YGPCRREMED…DVKGKGDVHC (76 aa)). Cystine bridges form between Cys-213–Cys-240, Cys-251–Cys-262, and Cys-264–Cys-285.

In terms of assembly, interacts with XLKD1. Binds IGF2 more than IGF1. Forms a ternary complex of about 140 to 150 kDa with IGF1 or IGF2 and a 85 kDa glycoprotein (ALS). Interacts with humanin; humanin competes with importin KPNB1 for binding to IGFBP3, blocking IGFBP3 nuclear import and IGFBP3-mediated apoptosis. Interacts with TMEM219. Interacts with RXRA; this interaction modulates the transcriptional activity of RXRA. Interacts with LRP1; this interaction mediates cell growth inhibition independent of IGF1. Phosphorylated by FAM20C in the extracellular medium. Phosphorylated by CK2; resulting in decreased nuclear localization. In terms of tissue distribution, plasma; expressed by most tissues.

The protein resides in the secreted. Its subcellular location is the nucleus. Multifunctional protein that plays a critical role in regulating the availability of IGFs such as IGF1 and IGF2 to their receptors and thereby regulates IGF-mediated cellular processes including proliferation, differentiation, and apoptosis in a cell-type specific manner. Also exhibits IGF-independent antiproliferative and apoptotic effects mediated by its receptor TMEM219/IGFBP-3R. Inhibits the positive effect of humanin on insulin sensitivity. Promotes testicular germ cell apoptosis. Acts via LRP-1/alpha2M receptor, also known as TGF-beta type V receptor, to mediate cell growth inhibition independent of IGF1. Mechanistically, induces serine-specific dephosphorylation of IRS1 or IRS2 upon ligation to its receptor, leading to the inhibitory cascade. In the nucleus, interacts with transcription factors such as retinoid X receptor-alpha/RXRA to regulate transcriptional signaling and apoptosis. This chain is Insulin-like growth factor-binding protein 3 (IGFBP3), found in Bos taurus (Bovine).